The following is an 86-amino-acid chain: MANIKSQKKRILTNEKARLRNKAVKSELRTVVRGFREALAAGDAEKAQAALALASKKLDKAVSKGVIHKNQAANRKSAIAKAAAKV.

This sequence belongs to the bacterial ribosomal protein bS20 family.

Its function is as follows. Binds directly to 16S ribosomal RNA. This chain is Small ribosomal subunit protein bS20, found in Kineococcus radiotolerans (strain ATCC BAA-149 / DSM 14245 / SRS30216).